Consider the following 163-residue polypeptide: Mediator of RNA polymerase II transcription subunit 10 (163 aa).

The tract at residues 57–79 is disordered; it reads AAPDPSYVQSPPSRTGLSPADPP. Residues 63–72 show a composition bias toward polar residues; sequence YVQSPPSRTG.

This sequence belongs to the Mediator complex subunit 10 family. Component of the Mediator complex.

The protein resides in the nucleus. Component of the Mediator complex, a coactivator involved in the regulated transcription of nearly all RNA polymerase II-dependent genes. Mediator functions as a bridge to convey information from gene-specific regulatory proteins to the basal RNA polymerase II transcription machinery. Mediator is recruited to promoters by direct interactions with regulatory proteins and serves as a scaffold for the assembly of a functional preinitiation complex with RNA polymerase II and the general transcription factors. The protein is Mediator of RNA polymerase II transcription subunit 10 (NUT2) of Coccidioides immitis (strain RS) (Valley fever fungus).